The chain runs to 180 residues: Endogenous alpha-amylase/subtilisin inhibitor (180 aa).

Intrachain disulfides connect Cys-42–Cys-89 and Cys-143–Cys-147.

The protein belongs to the protease inhibitor I3 (leguminous Kunitz-type inhibitor) family.

Its function is as follows. Inhibitor of endogenous alpha-amylase (wheat also produces an exogenous inhibitor which inactivates alpha-amylase from animal and insect origin). This inhibitor can also inhibit subtilisin. In Triticum aestivum (Wheat), this protein is Endogenous alpha-amylase/subtilisin inhibitor.